Reading from the N-terminus, the 167-residue chain is Cyclic pyranopterin monophosphate synthase 2 (167 aa).

The disordered stretch occupies residues 1-23 (MARASGASDYRSGELSHQDERGA). Positions 11–23 (RSGELSHQDERGA) are enriched in basic and acidic residues. Substrate-binding positions include 86–88 (LCH) and 122–123 (ME). Asp137 is an active-site residue.

Belongs to the MoaC family. As to quaternary structure, homohexamer; trimer of dimers.

The enzyme catalyses (8S)-3',8-cyclo-7,8-dihydroguanosine 5'-triphosphate = cyclic pyranopterin phosphate + diphosphate. It participates in cofactor biosynthesis; molybdopterin biosynthesis. Its function is as follows. Catalyzes the conversion of (8S)-3',8-cyclo-7,8-dihydroguanosine 5'-triphosphate to cyclic pyranopterin monophosphate (cPMP). The protein is Cyclic pyranopterin monophosphate synthase 2 (moaC2) of Mycobacterium bovis (strain ATCC BAA-935 / AF2122/97).